The chain runs to 430 residues: Gamma-glutamyl phosphate reductase (430 aa).

The protein belongs to the gamma-glutamyl phosphate reductase family.

Its subcellular location is the cytoplasm. The enzyme catalyses L-glutamate 5-semialdehyde + phosphate + NADP(+) = L-glutamyl 5-phosphate + NADPH + H(+). It functions in the pathway amino-acid biosynthesis; L-proline biosynthesis; L-glutamate 5-semialdehyde from L-glutamate: step 2/2. Its function is as follows. Catalyzes the NADPH-dependent reduction of L-glutamate 5-phosphate into L-glutamate 5-semialdehyde and phosphate. The product spontaneously undergoes cyclization to form 1-pyrroline-5-carboxylate. This Rhodopseudomonas palustris (strain TIE-1) protein is Gamma-glutamyl phosphate reductase.